The chain runs to 439 residues: Acyl-coenzyme A thioesterase 10, mitochondrial (439 aa).

The transit peptide at 1-21 (MKRAAMRLWTLNKGLLTHGRG) directs the protein to the mitochondrion. HotDog ACOT-type domains are found at residues 85 to 209 (SYIE…QDSE) and 289 to 401 (EDTK…EKEV).

It belongs to the acyl coenzyme A hydrolase family.

It localises to the mitochondrion. Functionally, catalyzes the hydrolysis of acyl-CoAs into free fatty acids and coenzyme A (CoASH), regulating their respective intracellular levels. Active on long chain acyl-CoAs. The polypeptide is Acyl-coenzyme A thioesterase 10, mitochondrial (Mus musculus (Mouse)).